The primary structure comprises 355 residues: uncharacterized protein (355 aa).

The protein resides in the cytoplasm. This is an uncharacterized protein from Saccharomyces cerevisiae (strain ATCC 204508 / S288c) (Baker's yeast).